Reading from the N-terminus, the 194-residue chain is Protein GrpE 1 (194 aa).

The tract at residues 1–22 (MIHNEEEQLEKKIEKNQDPKIN) is disordered.

Belongs to the GrpE family. In terms of assembly, homodimer.

It localises to the cytoplasm. Its function is as follows. Participates actively in the response to hyperosmotic and heat shock by preventing the aggregation of stress-denatured proteins, in association with DnaK and GrpE. It is the nucleotide exchange factor for DnaK and may function as a thermosensor. Unfolded proteins bind initially to DnaJ; upon interaction with the DnaJ-bound protein, DnaK hydrolyzes its bound ATP, resulting in the formation of a stable complex. GrpE releases ADP from DnaK; ATP binding to DnaK triggers the release of the substrate protein, thus completing the reaction cycle. Several rounds of ATP-dependent interactions between DnaJ, DnaK and GrpE are required for fully efficient folding. This is Protein GrpE 1 from Buchnera aphidicola subsp. Acyrthosiphon pisum (strain APS) (Acyrthosiphon pisum symbiotic bacterium).